A 484-amino-acid polypeptide reads, in one-letter code: MSDRIRVRYAPSPTGYLHIGNARTALFNYLYAKHYNGDFVIRIEDTDKKRNLEDGETSQFDNLKWLGLDWDESVDKDNGYGPYRQSERQHIYQPLIDQLLAEDKAYKCYMTEEELEAEREAQIARGEMPRYGGQHAHLTEEQRQQFEAEGRQPSIRFRVPQNQTYSFDDMVKGNISFDSNGIGDWVIVKKDGIPTYNFAVAIDDHYMQISDVIRGDDHISNTPKQIMIYEAFGWEPPRFGHMSLIVNEERKKLSKRDGQILQFIEQYRDLGYLPEALFNFIALLGWSPEGEEEIFSKEEFIKIFDEKRLSKSPAFFDKQKLAWVNNQYMKQKDTETVFQLALPHLIKANLIPEVPSEEDLSWGRKLIALYQKEMSYAGEIVPLSEMFFKEMPALGEEEQQVINGEQVPELMTHLFSKLEALEPFEAAEIKKTIKEVQKETGIKGKQLFMPIRVAVTGQMHGPELPNTIEVLGKEKVLNRLKQYK.

Positions 11 to 21 (PSPTGYLHIGN) match the 'HIGH' region motif. Residues 252–256 (KLSKR) carry the 'KMSKS' region motif. Residue K255 participates in ATP binding.

This sequence belongs to the class-I aminoacyl-tRNA synthetase family. Glutamate--tRNA ligase type 1 subfamily. Monomer.

The protein resides in the cytoplasm. The enzyme catalyses tRNA(Glu) + L-glutamate + ATP = L-glutamyl-tRNA(Glu) + AMP + diphosphate. In terms of biological role, catalyzes the attachment of glutamate to tRNA(Glu) in a two-step reaction: glutamate is first activated by ATP to form Glu-AMP and then transferred to the acceptor end of tRNA(Glu). In Staphylococcus aureus (strain Mu3 / ATCC 700698), this protein is Glutamate--tRNA ligase.